A 276-amino-acid chain; its full sequence is MRESLKNSKRLVIKVGTSTLMYGNGHINLRTIEKLAMVLSDLRNEGKEVILVSSGAIGVGCHKLQLPVRPTSIPDLQAVASVGQSELMHIYSKFFGEYGQVVGQVLLTRDVTDFPISRENVMNTLDSLLSRGIIPIVNENDTVAVEELEHVTKYGDNDLLSAIVAKLVQADLLIMLSDIDGFYGSNPTTDPDAVMFSEINQITPEIEALAGGRGSKFGTGGMLTKLSAASYCMESNQKMILTNGKNPTVIFNIMQGEQVGTLFASKKEELSHDRTH.

Lysine 14 is an ATP binding site. Substrate contacts are provided by serine 54, aspartate 141, and asparagine 157. ATP is bound by residues 177–178 (SD) and 219–225 (TGGMLTK).

This sequence belongs to the glutamate 5-kinase family.

It is found in the cytoplasm. The enzyme catalyses L-glutamate + ATP = L-glutamyl 5-phosphate + ADP. It functions in the pathway amino-acid biosynthesis; L-proline biosynthesis; L-glutamate 5-semialdehyde from L-glutamate: step 1/2. Functionally, catalyzes the transfer of a phosphate group to glutamate to form L-glutamate 5-phosphate. In Listeria monocytogenes serotype 4a (strain HCC23), this protein is Glutamate 5-kinase.